Reading from the N-terminus, the 63-residue chain is Large ribosomal subunit protein uL29 (63 aa).

This sequence belongs to the universal ribosomal protein uL29 family.

In Pseudomonas fluorescens (strain ATCC BAA-477 / NRRL B-23932 / Pf-5), this protein is Large ribosomal subunit protein uL29.